The following is a 436-amino-acid chain: Amino acid transporter AVT3C (436 aa).

Residues 1–13 (MGFQNEASSSSYT) show a composition bias toward polar residues. A disordered region spans residues 1–21 (MGFQNEASSSSYTLKIPPPAR). At 1–38 (MGFQNEASSSSYTLKIPPPAREDSPLLGKGPPLSSQFK) the chain is on the cytoplasmic side. The chain crosses the membrane as a helical span at residues 39 to 59 (TFANVFIAVVGAGVLGLPYAF). At 60–65 (KRTGWL) the chain is on the vacuolar side. A helical membrane pass occupies residues 66-86 (MGVLLLVSVSVLTHHCMMLLV). The Cytoplasmic segment spans residues 87-118 (YTRRKLDSFNAGISKIGSFGDLGFAVCGSLGR). The helical transmembrane segment at 119–139 (IVVDLFIILSQAGFCVGYLIF) threads the bilayer. Residues 140–166 (IGTTLANLSDPESPTSLRHQFTRLGSE) are Vacuolar-facing. A helical transmembrane segment spans residues 167–187 (FLGVSSKSLYIWGCFPFQLGL). The Cytoplasmic portion of the chain corresponds to 188–195 (NSIKTLTH). The helical transmembrane segment at 196–216 (LAPLSIFADIVDLGAMAVVIV) threads the bilayer. Residues 217-228 (EDSMIILKQRPD) lie on the Vacuolar side of the membrane. The helical transmembrane segment at 229-249 (VVAFGGMSLFLYGMGVAVYSF) threads the bilayer. Over 250–273 (EGVGMVLPLESEMKDKDKFGKVLA) the chain is Cytoplasmic. A helical transmembrane segment spans residues 274–294 (LGMGFISLIYIAFGILGYLAF). Residues 295–309 (GEDTMDIITANLGAG) lie on the Vacuolar side of the membrane. Residues 310–330 (LVSTVVQLGLCINLFFTFPLM) form a helical membrane-spanning segment. Residues 331-352 (MNPVFEIVERRFSRGMYSAWLR) are Cytoplasmic-facing. The chain crosses the membrane as a helical span at residues 353–373 (WVLVLAVTLVALFVPNFADFL). Topologically, residues 374–376 (SLV) are vacuolar. The chain crosses the membrane as a helical span at residues 377-397 (GSSTCCVLGFVLPALFHLLVF). Residues 398-411 (KEEMGWLQWSSDTA) lie on the Cytoplasmic side of the membrane. The helical transmembrane segment at 412–432 (IVVLGVVLAVSGTWSSLSEIF) threads the bilayer. Residues 433 to 436 (SVKV) are Vacuolar-facing.

This sequence belongs to the amino acid/polyamine transporter 2 family. Amino acid/auxin permease (AAAP) (TC 2.A.18.8) subfamily. In terms of tissue distribution, ubiquitous.

It localises to the vacuole membrane. In terms of biological role, translocates preferentially neutral amino acids from the vacuole to the cytoplasm. The protein is Amino acid transporter AVT3C of Arabidopsis thaliana (Mouse-ear cress).